The following is a 151-amino-acid chain: Deoxyuridine 5'-triphosphate nucleotidohydrolase (151 aa).

Residues 70-72 (RSG), N83, 87-89 (LID), and M97 each bind substrate.

Belongs to the dUTPase family. Mg(2+) serves as cofactor.

The enzyme catalyses dUTP + H2O = dUMP + diphosphate + H(+). The protein operates within pyrimidine metabolism; dUMP biosynthesis; dUMP from dCTP (dUTP route): step 2/2. This enzyme is involved in nucleotide metabolism: it produces dUMP, the immediate precursor of thymidine nucleotides and it decreases the intracellular concentration of dUTP so that uracil cannot be incorporated into DNA. The sequence is that of Deoxyuridine 5'-triphosphate nucleotidohydrolase from Pseudomonas paraeruginosa (strain DSM 24068 / PA7) (Pseudomonas aeruginosa (strain PA7)).